Consider the following 381-residue polypeptide: Neuropeptide Y receptor type 2 (381 aa).

Positions 1–37 are disordered; the sequence is MGPVGAEADENQTVEVKVEPYGPGHTTPRGELPPDPE. Over 1 to 51 the chain is Extracellular; the sequence is MGPVGAEADENQTVEVKVEPYGPGHTTPRGELPPDPEPELIDSTKLVEVQV. Asn11 carries an N-linked (GlcNAc...) asparagine glycan. The helical transmembrane segment at 52–72 threads the bilayer; sequence ILILAYCSIILLGVVGNSLVI. Over 73–86 the chain is Cytoplasmic; it reads HVVIKFKSMRTVTN. The chain crosses the membrane as a helical span at residues 87 to 107; the sequence is FFIANLAVADLLVNTLCLPFT. The Extracellular segment spans residues 108-124; it reads LTYTLMGEWKMGPVLCH. A disulfide bridge links Cys123 with Cys203. The helical transmembrane segment at 125-145 threads the bilayer; sequence LVPYAQGLAVQVSTITLTVIA. Residues 146 to 165 are Cytoplasmic-facing; the sequence is LDRHRCIVYHLESKISKRIS. Residues 166–186 traverse the membrane as a helical segment; the sequence is FLIIGLAWGISALLASPLAIF. Topologically, residues 187–216 are extracellular; sequence REYSLIEIIPDFEIVACTEKWPGEEKSVYG. The chain crosses the membrane as a helical span at residues 217-237; it reads TVYSLSTLLILYVLPLGIISF. The Cytoplasmic portion of the chain corresponds to 238–268; that stretch reads SYTRIWSKLRNHVSPGAASDHYHQRRHKMTK. Residues 269 to 289 form a helical membrane-spanning segment; the sequence is MLVCVVVVFAVSWLPLHAFQL. Residues 290–304 lie on the Extracellular side of the membrane; it reads AVDIDSHVLDLKEYK. Residues 305 to 325 form a helical membrane-spanning segment; it reads LIFTVFHIIAMCSTFANPLLY. Topologically, residues 326–381 are cytoplasmic; that stretch reads GWMNSNYRKAFLSAFRCEQRLDAIHSEVSMTFKAKKNLEVKKNNGPTDSFSEATNV. Cys342 is lipidated: S-palmitoyl cysteine.

This sequence belongs to the G-protein coupled receptor 1 family.

It localises to the cell membrane. Its function is as follows. Receptor for neuropeptide Y and peptide YY. This Mus musculus (Mouse) protein is Neuropeptide Y receptor type 2 (Npy2r).